The primary structure comprises 487 residues: UDP-N-acetylmuramoyl-L-alanyl-D-glutamate--2,6-diaminopimelate ligase (487 aa).

Residues Leu23 and Ser25 each contribute to the UDP-N-acetyl-alpha-D-muramoyl-L-alanyl-D-glutamate site. Position 108–114 (Gly108–Ser114) interacts with ATP. UDP-N-acetyl-alpha-D-muramoyl-L-alanyl-D-glutamate is bound by residues Thr150 to Thr151, Ser177, Gln183, and Arg185. Residue Lys217 is modified to N6-carboxylysine. Residues Arg378, Asp402–Arg405, Gly453, and Glu457 each bind meso-2,6-diaminopimelate. A Meso-diaminopimelate recognition motif motif is present at residues Asp402–Arg405.

Belongs to the MurCDEF family. MurE subfamily. It depends on Mg(2+) as a cofactor. In terms of processing, carboxylation is probably crucial for Mg(2+) binding and, consequently, for the gamma-phosphate positioning of ATP.

It localises to the cytoplasm. The enzyme catalyses UDP-N-acetyl-alpha-D-muramoyl-L-alanyl-D-glutamate + meso-2,6-diaminopimelate + ATP = UDP-N-acetyl-alpha-D-muramoyl-L-alanyl-gamma-D-glutamyl-meso-2,6-diaminopimelate + ADP + phosphate + H(+). It functions in the pathway cell wall biogenesis; peptidoglycan biosynthesis. Its function is as follows. Catalyzes the addition of meso-diaminopimelic acid to the nucleotide precursor UDP-N-acetylmuramoyl-L-alanyl-D-glutamate (UMAG) in the biosynthesis of bacterial cell-wall peptidoglycan. This chain is UDP-N-acetylmuramoyl-L-alanyl-D-glutamate--2,6-diaminopimelate ligase, found in Pseudomonas aeruginosa (strain ATCC 15692 / DSM 22644 / CIP 104116 / JCM 14847 / LMG 12228 / 1C / PRS 101 / PAO1).